The chain runs to 251 residues: Cell division protein ZapD (251 aa).

This sequence belongs to the ZapD family. Interacts with FtsZ.

It localises to the cytoplasm. In terms of biological role, cell division factor that enhances FtsZ-ring assembly. Directly interacts with FtsZ and promotes bundling of FtsZ protofilaments, with a reduction in FtsZ GTPase activity. The chain is Cell division protein ZapD from Burkholderia thailandensis (strain ATCC 700388 / DSM 13276 / CCUG 48851 / CIP 106301 / E264).